A 577-amino-acid chain; its full sequence is Arginine--tRNA ligase (577 aa).

The 'HIGH' region motif lies at proline 122–histidine 132.

It belongs to the class-I aminoacyl-tRNA synthetase family. In terms of assembly, monomer.

Its subcellular location is the cytoplasm. It catalyses the reaction tRNA(Arg) + L-arginine + ATP = L-arginyl-tRNA(Arg) + AMP + diphosphate. The protein is Arginine--tRNA ligase of Vibrio campbellii (strain ATCC BAA-1116).